Here is a 572-residue protein sequence, read N- to C-terminus: Protein misato homolog 1 (572 aa).

It belongs to the misato family.

It is found in the mitochondrion outer membrane. Its subcellular location is the cytoplasm. In terms of biological role, involved in the regulation of mitochondrial distribution and morphology. Required for mitochondrial fusion and mitochondrial network formation. The chain is Protein misato homolog 1 (MSTO1) from Bos taurus (Bovine).